A 431-amino-acid polypeptide reads, in one-letter code: 3-phosphoshikimate 1-carboxyvinyltransferase (431 aa).

Residues lysine 20, serine 21, and arginine 25 each contribute to the 3-phosphoshikimate site. Lysine 20 is a phosphoenolpyruvate binding site. Glycine 91 and arginine 119 together coordinate phosphoenolpyruvate. 4 residues coordinate 3-phosphoshikimate: serine 164, glutamine 166, aspartate 317, and lysine 344. Glutamine 166 lines the phosphoenolpyruvate pocket. Aspartate 317 serves as the catalytic Proton acceptor. The phosphoenolpyruvate site is built by arginine 348 and arginine 390.

Belongs to the EPSP synthase family. Monomer.

The protein localises to the cytoplasm. The catalysed reaction is 3-phosphoshikimate + phosphoenolpyruvate = 5-O-(1-carboxyvinyl)-3-phosphoshikimate + phosphate. It functions in the pathway metabolic intermediate biosynthesis; chorismate biosynthesis; chorismate from D-erythrose 4-phosphate and phosphoenolpyruvate: step 6/7. Its function is as follows. Catalyzes the transfer of the enolpyruvyl moiety of phosphoenolpyruvate (PEP) to the 5-hydroxyl of shikimate-3-phosphate (S3P) to produce enolpyruvyl shikimate-3-phosphate and inorganic phosphate. This chain is 3-phosphoshikimate 1-carboxyvinyltransferase, found in Aquifex aeolicus (strain VF5).